Reading from the N-terminus, the 1407-residue chain is DNA-directed RNA polymerase subunit beta' (1407 aa).

Residues Cys-70, Cys-72, Cys-85, and Cys-88 each contribute to the Zn(2+) site. The Mg(2+) site is built by Asp-460, Asp-462, and Asp-464. Residues Cys-814, Cys-889, Cys-896, and Cys-899 each contribute to the Zn(2+) site. Residues 1384-1407 are disordered; it reads LVGRSTSSGTEVTSPSKDAIPLGG. Residues 1386–1399 are compositionally biased toward polar residues; the sequence is GRSTSSGTEVTSPS.

This sequence belongs to the RNA polymerase beta' chain family. In terms of assembly, the RNAP catalytic core consists of 2 alpha, 1 beta, 1 beta' and 1 omega subunit. When a sigma factor is associated with the core the holoenzyme is formed, which can initiate transcription. Mg(2+) serves as cofactor. The cofactor is Zn(2+).

It carries out the reaction RNA(n) + a ribonucleoside 5'-triphosphate = RNA(n+1) + diphosphate. Its function is as follows. DNA-dependent RNA polymerase catalyzes the transcription of DNA into RNA using the four ribonucleoside triphosphates as substrates. This is DNA-directed RNA polymerase subunit beta' from Xylella fastidiosa (strain Temecula1 / ATCC 700964).